Consider the following 237-residue polypeptide: Mitochondrial inner membrane protease atp23 (237 aa).

Polar residues predominate over residues 1–18 (MSTSESSNNGSQPGNQDT). A disordered region spans residues 1–24 (MSTSESSNNGSQPGNQDTGYIPGD). A divalent metal cation is bound at residue histidine 136. Glutamate 137 is a catalytic residue. Histidine 140 contacts a divalent metal cation.

The protein belongs to the peptidase M76 family.

Its subcellular location is the mitochondrion inner membrane. Functionally, has a dual role in the assembly of mitochondrial ATPase. Acts as a protease that removes N-terminal residues of mitochondrial ATPase CF(0) subunit 6 at the intermembrane space side. Also involved in the correct assembly of the membrane-embedded ATPase CF(0) particle, probably mediating association of subunit 6 with the subunit 9 ring. This is Mitochondrial inner membrane protease atp23 (atp23) from Aspergillus niger (strain ATCC MYA-4892 / CBS 513.88 / FGSC A1513).